Reading from the N-terminus, the 329-residue chain is Delta-aminolevulinic acid dehydratase (329 aa).

Zn(2+) is bound by residues Cys122, Cys124, His131, and Cys132. The active-site Schiff-base intermediate with substrate is the Lys199. Position 199 is an N6-succinyllysine (Lys199). Arg209 lines the 5-aminolevulinate pocket. At Ser215 the chain carries Phosphoserine. Position 221 (Arg221) interacts with 5-aminolevulinate. Cys223 contributes to the Zn(2+) binding site. Lys252 acts as the Schiff-base intermediate with substrate in catalysis. The residue at position 252 (Lys252) is an N6-succinyllysine. 5-aminolevulinate contacts are provided by Ser279 and Tyr318.

It belongs to the ALAD family. As to quaternary structure, homooctamer; active form. Homohexamer; low activity form. It depends on Zn(2+) as a cofactor.

It localises to the cytoplasm. It is found in the cytosol. The catalysed reaction is 2 5-aminolevulinate = porphobilinogen + 2 H2O + H(+). It participates in porphyrin-containing compound metabolism; protoporphyrin-IX biosynthesis; coproporphyrinogen-III from 5-aminolevulinate: step 1/4. Can alternate between a fully active homooctamer and a low-activity homohexamer. A bound magnesium ion may promote the assembly of the fully active homooctamer. The magnesium-binding site is absent in the low-activity homohexamer. Inhibited by compounds that favor the hexameric state. Inhibited by divalent lead ions. The lead ions partially displace the zinc cofactor. Catalyzes an early step in the biosynthesis of tetrapyrroles. Binds two molecules of 5-aminolevulinate per subunit, each at a distinct site, and catalyzes their condensation to form porphobilinogen. This chain is Delta-aminolevulinic acid dehydratase (ALAD), found in Bos taurus (Bovine).